The chain runs to 312 residues: Malate dehydrogenase (312 aa).

Residues 7-13 (GAAGGIG) and Asp-34 each bind NAD(+). Substrate-binding residues include Arg-81 and Arg-87. NAD(+)-binding positions include Asn-94 and 117–119 (ITN). 2 residues coordinate substrate: Asn-119 and Arg-153. Residue His-177 is the Proton acceptor of the active site. Met-227 contributes to the NAD(+) binding site.

The protein belongs to the LDH/MDH superfamily. MDH type 1 family. As to quaternary structure, homodimer.

The catalysed reaction is (S)-malate + NAD(+) = oxaloacetate + NADH + H(+). Functionally, catalyzes the reversible oxidation of malate to oxaloacetate. This chain is Malate dehydrogenase, found in Escherichia coli O6:K15:H31 (strain 536 / UPEC).